A 131-amino-acid polypeptide reads, in one-letter code: Small ribosomal subunit protein uS11 (131 aa).

It belongs to the universal ribosomal protein uS11 family. In terms of assembly, part of the 30S ribosomal subunit. Interacts with proteins S7 and S18. Binds to IF-3.

Located on the platform of the 30S subunit, it bridges several disparate RNA helices of the 16S rRNA. Forms part of the Shine-Dalgarno cleft in the 70S ribosome. The chain is Small ribosomal subunit protein uS11 from Pelobacter propionicus (strain DSM 2379 / NBRC 103807 / OttBd1).